The following is a 152-amino-acid chain: Large ribosomal subunit protein bL9 (152 aa).

It belongs to the bacterial ribosomal protein bL9 family.

Functionally, binds to the 23S rRNA. This chain is Large ribosomal subunit protein bL9, found in Nostoc sp. (strain PCC 7120 / SAG 25.82 / UTEX 2576).